A 238-amino-acid chain; its full sequence is Uridylate kinase (238 aa).

12 to 15 (KLSG) is a binding site for ATP. The tract at residues 20-25 (GEKGFG) is involved in allosteric activation by GTP. G54 provides a ligand contact to UMP. Residues G55 and R59 each contribute to the ATP site. UMP contacts are provided by residues D72 and 133–140 (TGNPYFST). ATP-binding residues include Y166 and D169.

Belongs to the UMP kinase family. As to quaternary structure, homohexamer.

It is found in the cytoplasm. It carries out the reaction UMP + ATP = UDP + ADP. It participates in pyrimidine metabolism; CTP biosynthesis via de novo pathway; UDP from UMP (UMPK route): step 1/1. With respect to regulation, allosterically activated by GTP. Inhibited by UTP. Functionally, catalyzes the reversible phosphorylation of UMP to UDP. The protein is Uridylate kinase of Clostridium botulinum (strain Hall / ATCC 3502 / NCTC 13319 / Type A).